A 60-amino-acid polypeptide reads, in one-letter code: Small, acid-soluble spore protein H (60 aa).

This sequence belongs to the SspH family.

The protein resides in the spore core. This Halalkalibacterium halodurans (strain ATCC BAA-125 / DSM 18197 / FERM 7344 / JCM 9153 / C-125) (Bacillus halodurans) protein is Small, acid-soluble spore protein H.